The following is a 258-amino-acid chain: MLVAERQQKIVEIVNMRSSIRVSELSDIFSVTEETIRRDLEKLEKEHKLSRSHGGAVSIQQKESEIHFSEREITNVIEKKAIAHEAAKYVKSGDRIILDASTTAWYMAKILPDIELTVITNSMKAAIELSNKENISVISTGGILLEKSLSFAGPLAERSLETYHVNKTFLSCKGFDVHNGMSDSNEWQALLKKRMIERSDQTILMADSSKWGNREFSHIASLQDVSRLITDSGLDPASVKALEDKKVKVTAVPLSKRG.

The HTH deoR-type domain occupies 3 to 58 (VAERQQKIVEIVNMRSSIRVSELSDIFSVTEETIRRDLEKLEKEHKLSRSHGGAVS). The H-T-H motif DNA-binding region spans 20-39 (IRVSELSDIFSVTEETIRRD).

This is an uncharacterized protein from Bacillus subtilis (strain 168).